Reading from the N-terminus, the 269-residue chain is Putative hydro-lyase RL2444 (269 aa).

Belongs to the D-glutamate cyclase family.

The polypeptide is Putative hydro-lyase RL2444 (Rhizobium johnstonii (strain DSM 114642 / LMG 32736 / 3841) (Rhizobium leguminosarum bv. viciae)).